Consider the following 326-residue polypeptide: Vacuolar protein sorting-associated protein 26A-A (326 aa).

The segment at 306-326 (TNFHQRFEPQEPQASAEEPEI) is disordered. The segment covering 315 to 326 (QEPQASAEEPEI) has biased composition (low complexity).

This sequence belongs to the VPS26 family. As to quaternary structure, component of the heterotrimeric retromer cargo-selective complex (CSC) which is believed to associate with variable sorting nexins to form functionally distinct retromer complex variants.

It localises to the cytoplasm. It is found in the endosome membrane. Its subcellular location is the early endosome. Functionally, acts as a component of the retromer cargo-selective complex (CSC). The CSC is believed to be the core functional component of retromer or respective retromer complex variants acting to prevent missorting of selected transmembrane cargo proteins into the lysosomal degradation pathway. Retromer mediates retrograde transport of cargo proteins from endosomes to the trans-Golgi network (TGN). The chain is Vacuolar protein sorting-associated protein 26A-A (vps26a-a) from Xenopus laevis (African clawed frog).